The primary structure comprises 148 residues: UPF0260 protein Sfri_1740 (148 aa).

This sequence belongs to the UPF0260 family.

This Shewanella frigidimarina (strain NCIMB 400) protein is UPF0260 protein Sfri_1740.